A 288-amino-acid chain; its full sequence is Elongation factor Ts (288 aa).

Positions 79 to 82 are involved in Mg(2+) ion dislocation from EF-Tu; that stretch reads TDFV.

This sequence belongs to the EF-Ts family.

Its subcellular location is the cytoplasm. Functionally, associates with the EF-Tu.GDP complex and induces the exchange of GDP to GTP. It remains bound to the aminoacyl-tRNA.EF-Tu.GTP complex up to the GTP hydrolysis stage on the ribosome. The chain is Elongation factor Ts from Ehrlichia ruminantium (strain Welgevonden).